A 366-amino-acid polypeptide reads, in one-letter code: Chorismate synthase (366 aa).

2 residues coordinate NADP(+): Arg48 and Arg54. Residues 125–127 (RSS), 238–239 (NA), Gly278, 293–297 (KPTSS), and Arg319 each bind FMN.

This sequence belongs to the chorismate synthase family. Homotetramer. It depends on FMNH2 as a cofactor.

The enzyme catalyses 5-O-(1-carboxyvinyl)-3-phosphoshikimate = chorismate + phosphate. Its pathway is metabolic intermediate biosynthesis; chorismate biosynthesis; chorismate from D-erythrose 4-phosphate and phosphoenolpyruvate: step 7/7. Its function is as follows. Catalyzes the anti-1,4-elimination of the C-3 phosphate and the C-6 proR hydrogen from 5-enolpyruvylshikimate-3-phosphate (EPSP) to yield chorismate, which is the branch point compound that serves as the starting substrate for the three terminal pathways of aromatic amino acid biosynthesis. This reaction introduces a second double bond into the aromatic ring system. The polypeptide is Chorismate synthase (Neisseria gonorrhoeae (strain ATCC 700825 / FA 1090)).